Here is a 477-residue protein sequence, read N- to C-terminus: 23S rRNA (uracil(1939)-C(5))-methyltransferase RlmD (477 aa).

The region spanning lysine 7–alanine 66 is the TRAM domain. [4Fe-4S] cluster is bound by residues cysteine 79, cysteine 89, cysteine 92, and cysteine 171. The S-adenosyl-L-methionine site is built by glutamine 280, phenylalanine 309, asparagine 314, glutamate 330, asparagine 365, and aspartate 386. Residue cysteine 432 is the Nucleophile of the active site.

It belongs to the class I-like SAM-binding methyltransferase superfamily. RNA M5U methyltransferase family. RlmD subfamily.

The enzyme catalyses uridine(1939) in 23S rRNA + S-adenosyl-L-methionine = 5-methyluridine(1939) in 23S rRNA + S-adenosyl-L-homocysteine + H(+). Catalyzes the formation of 5-methyl-uridine at position 1939 (m5U1939) in 23S rRNA. This chain is 23S rRNA (uracil(1939)-C(5))-methyltransferase RlmD, found in Albidiferax ferrireducens (strain ATCC BAA-621 / DSM 15236 / T118) (Rhodoferax ferrireducens).